The following is a 288-amino-acid chain: Transmembrane and coiled-coil domain-containing protein 5A (288 aa).

A coiled-coil region spans residues 10–192; sequence KRNIISLNMD…ALFLEREVSK (183 aa). The helical transmembrane segment at 224–244 threads the bilayer; that stretch reads IFCCLFFITLFFIRLLSYMFF.

Belongs to the TMCO5 family.

It is found in the endoplasmic reticulum membrane. The protein resides in the nucleus membrane. This is Transmembrane and coiled-coil domain-containing protein 5A (TMCO5A) from Homo sapiens (Human).